A 233-amino-acid polypeptide reads, in one-letter code: ATP synthase subunit a (233 aa).

Transmembrane regions (helical) follow at residues 29–49, 86–106, 118–135, 188–208, and 209–229; these read FKHV…GLIV, VFPL…LGLV, TNAA…YQGL, VLFF…LFLL, and GKVL…KGAF.

It belongs to the ATPase A chain family. In terms of assembly, F-type ATPases have 2 components, CF(1) - the catalytic core - and CF(0) - the membrane proton channel. CF(1) has five subunits: alpha(3), beta(3), gamma(1), delta(1), epsilon(1). CF(0) has three main subunits: a(1), b(2) and c(9-12). The alpha and beta chains form an alternating ring which encloses part of the gamma chain. CF(1) is attached to CF(0) by a central stalk formed by the gamma and epsilon chains, while a peripheral stalk is formed by the delta and b chains.

It localises to the cell inner membrane. Functionally, key component of the proton channel; it plays a direct role in the translocation of protons across the membrane. In Nitratidesulfovibrio vulgaris (strain ATCC 29579 / DSM 644 / CCUG 34227 / NCIMB 8303 / VKM B-1760 / Hildenborough) (Desulfovibrio vulgaris), this protein is ATP synthase subunit a.